A 509-amino-acid polypeptide reads, in one-letter code: Coiled-coil domain-containing protein 181 (509 aa).

Residues 58-82 (VIEHTKQHSDPDKSLQDEVSPRKND) show a composition bias toward basic and acidic residues. 3 disordered regions span residues 58–120 (VIEH…EEED), 241–332 (PINN…VTST), and 345–367 (QLEQ…EEKE). 2 stretches are compositionally biased toward polar residues: residues 243 to 266 (NNAN…SVSG) and 300 to 332 (TCPS…VTST). The stretch at 335-375 (LSPRQKELQKQLEQKREKLKREEERRKIEEEKEKKRENDIV) forms a coiled coil.

This sequence belongs to the CCDC181 family. As to quaternary structure, homodimer. Interacts with HOOK1. Interacts with HOOK2. Interacts with HOOK3.

The protein localises to the cytoplasm. It is found in the cytoskeleton. It localises to the cell projection. The protein resides in the cilium. Its subcellular location is the flagellum. Its function is as follows. Microtubule-binding protein that localizes to the microtubular manchette of elongating spermatids. The protein is Coiled-coil domain-containing protein 181 of Pongo abelii (Sumatran orangutan).